The following is a 204-amino-acid chain: Imidazoleglycerol-phosphate dehydratase (204 aa).

The segment at 183 to 204 (DPRMDGITPSTKGTLSESGDSQ) is disordered. Polar residues predominate over residues 190 to 204 (TPSTKGTLSESGDSQ).

This sequence belongs to the imidazoleglycerol-phosphate dehydratase family.

It is found in the cytoplasm. It carries out the reaction D-erythro-1-(imidazol-4-yl)glycerol 3-phosphate = 3-(imidazol-4-yl)-2-oxopropyl phosphate + H2O. It functions in the pathway amino-acid biosynthesis; L-histidine biosynthesis; L-histidine from 5-phospho-alpha-D-ribose 1-diphosphate: step 6/9. The polypeptide is Imidazoleglycerol-phosphate dehydratase (Alcanivorax borkumensis (strain ATCC 700651 / DSM 11573 / NCIMB 13689 / SK2)).